The sequence spans 97 residues: Co-chaperonin GroES (97 aa).

This sequence belongs to the GroES chaperonin family. In terms of assembly, heptamer of 7 subunits arranged in a ring. Interacts with the chaperonin GroEL.

The protein resides in the cytoplasm. Functionally, together with the chaperonin GroEL, plays an essential role in assisting protein folding. The GroEL-GroES system forms a nano-cage that allows encapsulation of the non-native substrate proteins and provides a physical environment optimized to promote and accelerate protein folding. GroES binds to the apical surface of the GroEL ring, thereby capping the opening of the GroEL channel. The polypeptide is Co-chaperonin GroES (Yersinia enterocolitica).